Here is a 539-residue protein sequence, read N- to C-terminus: Polyol transporter 5 (539 aa).

The span at 1-11 (MTGATPENRTA) shows a compositional bias: polar residues. The segment at 1 to 24 (MTGATPENRTAPSPPPVKHVPESV) is disordered. Transmembrane regions (helical) follow at residues 37–57 (FACAILASMTSILLGYDIGVM), 73–93 (LQIGILAGSLNIYSLIGSCAA), 104–124 (YTIVLAGAIFFAGAILMGLSP), 127–147 (AFLMFGRFIAGIGVGYALMIA), 165–185 (SFPEVFINAGIMLGYVSNLAF), 196–216 (LMLGIGAVPSVILAIGVLAMP), 296–316 (IAAIGIHFFQQASGIDAVVLF), 333–353 (LLATVAVGVVKTSFILVATFL), 364–384 (LTSVGGMVLSLAALGTSLTII), 391–411 (VMWAVVVAIATVMTYVATFSI), 433–453 (GSSMGVVVNRVTSGVISISFL), and 463–483 (GAFYLFGGIATVAWVFFYTFL). Basic and acidic residues-rich tracts occupy residues 503-514 (WRDSKSKPKGNP) and 530-539 (QWKEGDTQSS). Positions 503-539 (WRDSKSKPKGNPEKTVPNPEVEIGSNKQWKEGDTQSS) are disordered.

Belongs to the major facilitator superfamily. Sugar transporter (TC 2.A.1.1) family. Highly expressed in roots. Expressed in vascular tissue of leaves, sepals and siliques.

The protein localises to the cell membrane. Functionally, plasma membrane broad-spectrum sugar-proton symporter. Mediates the uptake of linear polyols such as sorbitol, xylitol, erythritol or glycerol. Can transport the cyclic polyol myo-inositol and different hexoses, pentoses (including ribose), tetroses and sugar alcohols. This Arabidopsis thaliana (Mouse-ear cress) protein is Polyol transporter 5 (PLT5).